The following is a 386-amino-acid chain: Interleukin-13 receptor subunit alpha-2 (386 aa).

The N-terminal stretch at 1 to 21 is a signal peptide; it reads MAFIHLDVGFLYTLLVCTAFG. At 22-338 the chain is on the extracellular side; the sequence is SMLSNAEIKV…CWKGDIWKET (317 aa). Fibronectin type-III domains lie at 33 to 133, 138 to 234, and 239 to 338; these read PPQD…SPQG, KIQD…LQNI, and PPDY…WKET. A disulfide bridge connects residues Cys64 and Cys112. An N-linked (GlcNAc...) asparagine glycan is attached at Asn114. 2 disulfides stabilise this stretch: Cys144/Cys154 and Cys183/Cys196. Residues Asn214 and Asn298 are each glycosylated (N-linked (GlcNAc...) asparagine). Cysteines 268 and 315 form a disulfide. Positions 321 to 325 match the WSXWS motif motif; that stretch reads WSEWS. Residues 339-359 form a helical membrane-spanning segment; the sequence is LVFFLIPFAFVSIFVLVITCL. At 360–386 the chain is on the cytoplasmic side; sequence LLYKQRALLKTIFHTKKEVFSHQDTFC.

The protein belongs to the type I cytokine receptor family. Type 5 subfamily. As to quaternary structure, interacts with IL4RA. Interacts with high affinity to interleukin-13 (IL13), but not to interleukin-4 (IL4). Post-translationally, cleaved by MMP8 leading to a soluble form that is also able to interact with IL13. Expressed in kidney, placenta, liver, skeletal muscle and thymus. Expression was not seen in whole blood and heart.

Its subcellular location is the cell membrane. In terms of biological role, cell surface receptor that plays a role in the regulation of IL-13-mediated responses. Functions as a decoy receptor that inhibits IL-13- and IL-4-mediated signal transduction via the JAK-STAT pathway and thereby modulates immune responses and inflammation. Serves as a functional signaling receptor for IL-13 in an alternative pathway involving AP-1 ultimately leading to the production of TGFB1. This Canis lupus familiaris (Dog) protein is Interleukin-13 receptor subunit alpha-2 (IL13RA2).